Reading from the N-terminus, the 463-residue chain is T-box transcription factor TBX1-A (463 aa).

2 disordered regions span residues 39 to 58 (SPSP…PCSA) and 75 to 104 (GASS…VKKN). A compositionally biased stretch (low complexity) spans 75-96 (GASSSSCASSTPGSGSTGSSSS). Positions 119–297 (LWDEFNQLGT…SNPFAKGFRD (179 aa)) form a DNA-binding region, T-box. Disordered regions lie at residues 320–354 (RSRN…PLHG) and 377–409 (VPLS…PYKY). Polar residues predominate over residues 323-332 (NPVSSPTQNG). Residues 333–347 (SDKDGDGRREYERDA) are compositionally biased toward basic and acidic residues. The Nuclear localization signal signature appears at 420-431 (KTRPAPYPLPTI).

In terms of assembly, binds DNA as a dimer. Interacts with dscr6/ripply3.

It localises to the nucleus. In terms of biological role, probable transcriptional regulator involved in developmental processes. Binds to the palindromic T site 5'-TTCACACCTAGGTGTGAA-3' DNA sequence. Induces pre-placodal ectoderm (PPE) gene expression in regions where RIPPLY3 is absent. Plays a role in the formation of the anteroposterior (AP) axis during embryonic development; required to establish the posterolateral border of the pre-placodal ectoderm (PPE) acting downstream of the retinoic acid receptor (RAR) signaling. This Xenopus laevis (African clawed frog) protein is T-box transcription factor TBX1-A (tbx1-a).